We begin with the raw amino-acid sequence, 342 residues long: Foldase protein PrsA (342 aa).

The signal sequence occupies residues 1–22; the sequence is MVSVKKIVASALVGVLMFSAVG. The N-palmitoyl cysteine moiety is linked to residue cysteine 23. Cysteine 23 carries the S-diacylglycerol cysteine lipid modification. The PpiC domain maps to 189–284; the sequence is DSGVLTKHLL…FGYHIIQAGA (96 aa).

The protein belongs to the PrsA family.

It localises to the cell membrane. It carries out the reaction [protein]-peptidylproline (omega=180) = [protein]-peptidylproline (omega=0). Functionally, plays a major role in protein secretion by helping the post-translocational extracellular folding of several secreted proteins. The polypeptide is Foldase protein PrsA (Clostridium perfringens (strain 13 / Type A)).